A 157-amino-acid polypeptide reads, in one-letter code: Transcriptional repressor NrdR (157 aa).

The segment at 1–21 is disordered; the sequence is MKCPNCHKNGSRVVDSRPADN. The segment at 3 to 34 is a zinc-finger region; it reads CPNCHKNGSRVVDSRPADNGHAIRRRRECEQC. One can recognise an ATP-cone domain in the interval 49-139; the sequence is LLVIKKNGTR…VYREFKDMHA (91 aa).

The protein belongs to the NrdR family. Zn(2+) serves as cofactor.

Negatively regulates transcription of bacterial ribonucleotide reductase nrd genes and operons by binding to NrdR-boxes. In Ligilactobacillus salivarius (strain UCC118) (Lactobacillus salivarius), this protein is Transcriptional repressor NrdR.